Consider the following 347-residue polypeptide: GMP reductase (347 aa).

108 to 131 contacts NADP(+); it reads NDFLKLQRILALSPALRFICVDVA. G181 and G183 together coordinate K(+). The Thioimidate intermediate role is filled by C186. 216-239 provides a ligand contact to NADP(+); that stretch reads IVGDGGCTCPGDVAKAFGGGADFV.

This sequence belongs to the IMPDH/GMPR family. GuaC type 1 subfamily. In terms of assembly, homotetramer.

It catalyses the reaction IMP + NH4(+) + NADP(+) = GMP + NADPH + 2 H(+). In terms of biological role, catalyzes the irreversible NADPH-dependent deamination of GMP to IMP. It functions in the conversion of nucleobase, nucleoside and nucleotide derivatives of G to A nucleotides, and in maintaining the intracellular balance of A and G nucleotides. This Tolumonas auensis (strain DSM 9187 / NBRC 110442 / TA 4) protein is GMP reductase.